The chain runs to 464 residues: ATP synthase subunit beta (464 aa).

Position 152–159 (152–159 (GGAGVGKT)) interacts with ATP.

It belongs to the ATPase alpha/beta chains family. As to quaternary structure, F-type ATPases have 2 components, CF(1) - the catalytic core - and CF(0) - the membrane proton channel. CF(1) has five subunits: alpha(3), beta(3), gamma(1), delta(1), epsilon(1). CF(0) has three main subunits: a(1), b(2) and c(9-12). The alpha and beta chains form an alternating ring which encloses part of the gamma chain. CF(1) is attached to CF(0) by a central stalk formed by the gamma and epsilon chains, while a peripheral stalk is formed by the delta and b chains.

The protein localises to the cell membrane. It catalyses the reaction ATP + H2O + 4 H(+)(in) = ADP + phosphate + 5 H(+)(out). In terms of biological role, produces ATP from ADP in the presence of a proton gradient across the membrane. The catalytic sites are hosted primarily by the beta subunits. This chain is ATP synthase subunit beta, found in Ureaplasma urealyticum serovar 10 (strain ATCC 33699 / Western).